A 147-amino-acid chain; its full sequence is MGHFTEEDKATITSLWGKVNVEDAGGETLGRLLVVYPWTQRFFDSFGNLSSASAIMGNPKVKAHGKKVLTSLGDAIKNLDDLKGTFAQLSELHCDKLHVDPENFRLLGNVLVTVLAIHFGKEFTPEVQASWQKMVAGVASALSSRYH.

The Globin domain occupies 3–147 (HFTEEDKATI…VASALSSRYH (145 aa)). The heme b site is built by His64 and His93.

It belongs to the globin family. Heterotetramer of two alpha chains and two gamma chains in fetal hemoglobin (Hb F). Red blood cells.

Functionally, gamma chains make up the fetal hemoglobin F, in combination with alpha chains. In Macaca fuscata fuscata (Japanese macaque), this protein is Hemoglobin subunit gamma (HBG).